We begin with the raw amino-acid sequence, 203 residues long: MSRYTGPSWKQARRLGLSLTGTGKELARRNYVPGQHGPNNRSKLSEYGLQLAEKQKLRFSYGLGEKQFRNLFVQATKIKQGTLGFNFMLLLERRLDNVVYRLGLATTRRQARQFVNHGHILVDGKRVDIPSYRVEVGQVISVREKSIKVPAILEAVEATLGRPAFVSFDAEKLEGSLTRLPERDEINPEINEALVVEFYNKML.

Residues 93–156 (RRLDNVVYRL…IKVPAILEAV (64 aa)) enclose the S4 RNA-binding domain.

Belongs to the universal ribosomal protein uS4 family. As to quaternary structure, part of the 30S ribosomal subunit. Contacts protein S5. The interaction surface between S4 and S5 is involved in control of translational fidelity.

One of the primary rRNA binding proteins, it binds directly to 16S rRNA where it nucleates assembly of the body of the 30S subunit. Its function is as follows. With S5 and S12 plays an important role in translational accuracy. The chain is Small ribosomal subunit protein uS4 from Streptococcus suis (strain 98HAH33).